We begin with the raw amino-acid sequence, 366 residues long: Peptide chain release factor 2 (366 aa).

Q253 carries the post-translational modification N5-methylglutamine.

The protein belongs to the prokaryotic/mitochondrial release factor family. Methylated by PrmC. Methylation increases the termination efficiency of RF2.

It localises to the cytoplasm. Functionally, peptide chain release factor 2 directs the termination of translation in response to the peptide chain termination codons UGA and UAA. In Yersinia pseudotuberculosis serotype I (strain IP32953), this protein is Peptide chain release factor 2.